Here is a 367-residue protein sequence, read N- to C-terminus: Mating-type protein ALPHA2 (367 aa).

The homeobox; TALE-type DNA-binding region spans 273-338; the sequence is GADAIDSEKL…NKRRTGAKKR (66 aa).

This sequence belongs to the TALE/M-ATYP homeobox family. In terms of assembly, forms a heterodimer with A1.

It is found in the nucleus. Its function is as follows. Mating type proteins are sequence specific DNA-binding proteins that act as master switches in yeast differentiation by controlling gene expression in a cell type-specific fashion. Transcriptional corepressor that acts in conjunction with A1 to repress transcription of haploid-specific genes. This chain is Mating-type protein ALPHA2 (MATB2), found in Yarrowia lipolytica (strain CLIB 122 / E 150) (Yeast).